The sequence spans 156 residues: Large ribosomal subunit protein bL17 (156 aa).

Residues 127–156 (RATRAAASKKAAEEKAAEAAEEKDEAAEEK) form a disordered region. Residues 136–146 (KAAEEKAAEAA) are compositionally biased toward basic and acidic residues. Acidic residues predominate over residues 147-156 (EEKDEAAEEK).

This sequence belongs to the bacterial ribosomal protein bL17 family. As to quaternary structure, part of the 50S ribosomal subunit. Contacts protein L32.

The chain is Large ribosomal subunit protein bL17 from Corynebacterium urealyticum (strain ATCC 43042 / DSM 7109).